A 247-amino-acid chain; its full sequence is tRNA pseudouridine synthase A (247 aa).

Catalysis depends on Asp-53, which acts as the Nucleophile. Residue Tyr-111 coordinates substrate.

This sequence belongs to the tRNA pseudouridine synthase TruA family. As to quaternary structure, homodimer.

It carries out the reaction uridine(38/39/40) in tRNA = pseudouridine(38/39/40) in tRNA. In terms of biological role, formation of pseudouridine at positions 38, 39 and 40 in the anticodon stem and loop of transfer RNAs. This Bacillus subtilis (strain 168) protein is tRNA pseudouridine synthase A.